We begin with the raw amino-acid sequence, 290 residues long: Ventral anterior homeobox 2 (290 aa).

Residues 1-17 (MGDGGAERDRGPARRAE) show a composition bias toward basic and acidic residues. The segment at 1–75 (MGDGGAERDR…GQPGPGEADH (75 aa)) is disordered. The segment at residues 102-161 (PKRTRTSFTAEQLYRLEMEFQRCQYVVGRERTELARQLNLSETQVKVWFQNRRTKQKKDQ) is a DNA-binding region (homeobox). The tract at residues 205 to 240 (PSLPGLPASHRGTSLGDPRNSSPRLNPLSSASASPP) is disordered. Low complexity predominate over residues 222–238 (PRNSSPRLNPLSSASAS).

Belongs to the EMX homeobox family.

It is found in the nucleus. Transcription factor that may function in dorsoventral specification of the forebrain. Regulates the expression of Wnt signaling antagonists including the expression of a truncated TCF7L2 isoform that cannot bind CTNNB1 and acts therefore as a potent dominant-negative Wnt antagonist. Plays a crucial role in eye development and, in particular, in the specification of the ventral optic vesicle. May be a regulator of axial polarization in the retina. The chain is Ventral anterior homeobox 2 (VAX2) from Homo sapiens (Human).